The following is a 475-amino-acid chain: Ribulose bisphosphate carboxylase large chain (475 aa).

A propeptide spanning residues 1-2 is cleaved from the precursor; that stretch reads MS. Pro-3 carries the N-acetylproline modification. The residue at position 14 (Lys-14) is an N6,N6,N6-trimethyllysine. Substrate contacts are provided by Asn-123 and Thr-173. Residue Lys-175 is the Proton acceptor of the active site. Substrate is bound at residue Lys-177. Mg(2+) contacts are provided by Lys-201, Asp-203, and Glu-204. An N6-carboxylysine modification is found at Lys-201. His-294 functions as the Proton acceptor in the catalytic mechanism. The substrate site is built by Arg-295, His-327, and Ser-379.

This sequence belongs to the RuBisCO large chain family. Type I subfamily. In terms of assembly, heterohexadecamer of 8 large chains and 8 small chains; disulfide-linked. The disulfide link is formed within the large subunit homodimers. The cofactor is Mg(2+). Post-translationally, the disulfide bond which can form in the large chain dimeric partners within the hexadecamer appears to be associated with oxidative stress and protein turnover.

The protein localises to the plastid. The protein resides in the chloroplast. It catalyses the reaction 2 (2R)-3-phosphoglycerate + 2 H(+) = D-ribulose 1,5-bisphosphate + CO2 + H2O. It carries out the reaction D-ribulose 1,5-bisphosphate + O2 = 2-phosphoglycolate + (2R)-3-phosphoglycerate + 2 H(+). Its function is as follows. RuBisCO catalyzes two reactions: the carboxylation of D-ribulose 1,5-bisphosphate, the primary event in carbon dioxide fixation, as well as the oxidative fragmentation of the pentose substrate in the photorespiration process. Both reactions occur simultaneously and in competition at the same active site. The polypeptide is Ribulose bisphosphate carboxylase large chain (Equisetum arvense (Field horsetail)).